A 199-amino-acid polypeptide reads, in one-letter code: Octanoyltransferase (199 aa).

A BPL/LPL catalytic domain is found at S27–K199. Residues R66 to H73, S133 to G135, and G146 to A148 contribute to the substrate site. C164 acts as the Acyl-thioester intermediate in catalysis.

Belongs to the LipB family.

The protein localises to the cytoplasm. The enzyme catalyses octanoyl-[ACP] + L-lysyl-[protein] = N(6)-octanoyl-L-lysyl-[protein] + holo-[ACP] + H(+). It participates in protein modification; protein lipoylation via endogenous pathway; protein N(6)-(lipoyl)lysine from octanoyl-[acyl-carrier-protein]: step 1/2. Functionally, catalyzes the transfer of endogenously produced octanoic acid from octanoyl-acyl-carrier-protein onto the lipoyl domains of lipoate-dependent enzymes. Lipoyl-ACP can also act as a substrate although octanoyl-ACP is likely to be the physiological substrate. The polypeptide is Octanoyltransferase (Legionella pneumophila (strain Paris)).